The primary structure comprises 218 residues: Radial spoke head 1 homolog (218 aa).

Over residues 1–13 (MSDAGTEEFDEEQ) the composition is skewed to acidic residues. A disordered region spans residues 1–48 (MSDAGTEEFDEEQGSLGEYEGDRNEAGERHGQGKAVLPRGDTYQGAYE). MORN repeat units follow at residues 19–42 (YEGD…RGDT), 43–65 (YQGA…NGAR), 66–88 (YTGE…DGSK), 89–111 (YEGS…NGDT), 112–134 (YDGE…ETGS), and 158–180 (YHGN…IGCE). The span at 20 to 31 (EGDRNEAGERHG) shows a compositional bias: basic and acidic residues.

In terms of assembly, component of the axonemal radial spoke complexes. Interacts with septin SEPT7. As to expression, testis-specific.

It localises to the cytoplasm. Its subcellular location is the cytoskeleton. The protein resides in the cilium axoneme. It is found in the flagellum basal body. The protein localises to the flagellum axoneme. Functions as part of axonemal radial spoke complexes that play an important part in the motility of sperm and cilia. The protein is Radial spoke head 1 homolog (rsph1) of Cyprinus carpio (Common carp).